Here is a 396-residue protein sequence, read N- to C-terminus: Putative F-box/kelch-repeat protein At4g11770 (396 aa).

The F-box domain occupies 9–55; sequence PCNMPYLPDDLLLNILGRVSRLYYPILSLVSKRFRSLVGSLELYKIR. Kelch repeat units lie at residues 151–197, 198–248, and 250–296; these read YIYM…VLDG, KIYV…YEEK, and YLFG…VFYK.

In Arabidopsis thaliana (Mouse-ear cress), this protein is Putative F-box/kelch-repeat protein At4g11770.